An 87-amino-acid chain; its full sequence is U14-lycotoxin-Ls1a (87 aa).

An N-terminal signal peptide occupies residues 1-20; that stretch reads MNSKVFAVLLLLALLTCVLS. A WAP domain is found at 21-66; it reads EKYCPTPRNTSCKKMNIRNNCCRDSDCTSNAFCCAEPCGNFCHKAS. 5 cysteine pairs are disulfide-bonded: Cys24–Cys54, Cys32–Cys58, Cys41–Cys53, Cys42–Cys80, and Cys47–Cys62.

The protein belongs to the venom protein 11 family. 01 (wap-1) subfamily. Post-translationally, contains 5 disulfide bonds. Expressed by the venom gland.

The protein localises to the secreted. Functionally, has antibacterial activity. This Lycosa singoriensis (Wolf spider) protein is U14-lycotoxin-Ls1a.